The sequence spans 72 residues: AAPYVIFGAKVPPHWLAIGTILTVVGGIYGPKAFSSPAAAAPAATPAAAPSSEPELDVEKAINDFLASDKKE.

F-type ATP synthases have 2 components, the catalytic core F(1) and the membrane-embedded component F(0), linked together by a central stalk and a peripheral stalk. The central stalk, also called rotor shaft, is often seen as part of F(1). The peripheral stalk is seen as part of F(0). F(0) contains the membrane channel next to the rotor. F-type ATP synthases form dimers but each monomer functions independently in ATP generation. The dimer consists of 18 different polypeptides: ATP1 (subunit alpha, part of F(1), 3 molecules per monomer), ATP2 (subunit beta, part of F(1), 3 molecules per monomer), ATP3 (subunit gamma, part of the central stalk), ATP4 (subunit b, part of the peripheral stalk), ATP5/OSCP (subunit 5/OSCP, part of the peripheral stalk), ATP6 (subunit a, part of the peripheral stalk), ATP7 (subunit d, part of the peripheral stalk), ATP8 (subunit 8, part of the peripheral stalk), OLI1 (subunit c, part of the rotor, 10 molecules per monomer), ATP14 (subunit h, part of the peripheral stalk), ATP15 (subunit epsilon, part of the central stalk), ATP16 (subunit delta, part of the central stalk), ATP17 (subunit f, part of the peripheral stalk), ATP18 (subunit i/j, part of the peripheral stalk). Dimer-specific subunits are ATP19 (subunit k, at interface between monomers), ATP20 (subunit g, at interface between monomers), TIM11 (subunit e, at interface between monomers). Also contains subunit L.

It localises to the mitochondrion inner membrane. Its function is as follows. Mitochondrial membrane ATP synthase (F(1)F(0) ATP synthase or Complex V) produces ATP from ADP in the presence of a proton gradient across the membrane which is generated by electron transport complexes of the respiratory chain. F-type ATP synthases consist of two structural domains, F(1) - containing the extramembraneous catalytic core, and F(0) - containing the membrane proton channel, linked together by a central stalk and a peripheral stalk. During catalysis, ATP synthesis in the catalytic domain of F(1) is coupled via a rotary mechanism of the central stalk subunits to proton translocation. The polypeptide is ATP synthase subunit L (Pichia angusta (Yeast)).